Here is a 138-residue protein sequence, read N- to C-terminus: Large ribosomal subunit protein uL11c (138 aa).

Belongs to the universal ribosomal protein uL11 family. Part of the ribosomal stalk of the 50S ribosomal subunit. Interacts with L10 and the large rRNA to form the base of the stalk. L10 forms an elongated spine to which L12 dimers bind in a sequential fashion forming a multimeric L10(L12)X complex.

The protein resides in the plastid. It localises to the chloroplast. Forms part of the ribosomal stalk which helps the ribosome interact with GTP-bound translation factors. This chain is Large ribosomal subunit protein uL11c, found in Cyanidioschyzon merolae (strain NIES-3377 / 10D) (Unicellular red alga).